The primary structure comprises 1507 residues: Protein TIC 214 (1507 aa).

6 helical membrane passes run 4–24 (IYLV…LPIG), 53–73 (TILL…VLAL), 81–101 (LWVK…IYLY), 129–149 (AFLE…NPVF), 163–183 (ISTF…IFFL), and 202–222 (LVKI…SFLC).

This sequence belongs to the TIC214 family. Part of the Tic complex.

The protein localises to the plastid. The protein resides in the chloroplast inner membrane. Its function is as follows. Involved in protein precursor import into chloroplasts. May be part of an intermediate translocation complex acting as a protein-conducting channel at the inner envelope. The protein is Protein TIC 214 of Staurastrum punctulatum (Green alga).